Here is a 414-residue protein sequence, read N- to C-terminus: Tyrosine--tRNA ligase (414 aa).

Y38 provides a ligand contact to L-tyrosine. Residues 43–52 (PTATSLHLGN) carry the 'HIGH' region motif. L-tyrosine-binding residues include Y165 and Q169. The short motif at 228–232 (KFGKS) is the 'KMSKS' region element. K231 contacts ATP. One can recognise an S4 RNA-binding domain in the interval 349–414 (FNANQIIDLG…KKYFFIIELI (66 aa)).

The protein belongs to the class-I aminoacyl-tRNA synthetase family. TyrS type 1 subfamily. As to quaternary structure, homodimer.

The protein localises to the cytoplasm. The catalysed reaction is tRNA(Tyr) + L-tyrosine + ATP = L-tyrosyl-tRNA(Tyr) + AMP + diphosphate + H(+). Functionally, catalyzes the attachment of tyrosine to tRNA(Tyr) in a two-step reaction: tyrosine is first activated by ATP to form Tyr-AMP and then transferred to the acceptor end of tRNA(Tyr). This Mesomycoplasma hyopneumoniae (strain 232) (Mycoplasma hyopneumoniae) protein is Tyrosine--tRNA ligase.